The following is a 443-amino-acid chain: Endothelin receptor type B (443 aa).

An N-terminal signal peptide occupies residues 1 to 26 (MQPLPTLCGRVLVALILACGVAGVQG). Residues 27–102 (EERRFPPARA…RTIEIKETFK (76 aa)) lie on the Extracellular side of the membrane. A compositionally biased stretch (polar residues) spans 51-62 (TKTSWPTGSNAS). The disordered stretch occupies residues 51-89 (TKTSWPTGSNASVPRLSAPPQMPKAGRTAGAQRRTLPPP). A glycan (N-linked (GlcNAc...) asparagine) is linked at Asn-60. Residues 103–127 (YINTVVSCLVFVLGIIGNSTLLRII) traverse the membrane as a helical segment. The Cytoplasmic portion of the chain corresponds to 128–138 (YKNKCMRNGPN). A helical transmembrane segment spans residues 139–164 (ILIASLALGDLLHIIIDIPINVYKLL). Residues 165–176 (AEDWPFGVEMCK) are Extracellular-facing. Cys-175 and Cys-256 are joined by a disulfide. A helical transmembrane segment spans residues 177–198 (LVPFIQKASVGITVLSLCALSI). The Cytoplasmic portion of the chain corresponds to 199–219 (DRYRAVASWSRIKGIGVPKWT). A helical membrane pass occupies residues 220–244 (AVEIVLIWVVSVVLAVPEAVGFDMI). Residues 245 to 272 (TADYKGSYLRICLLHPTQKTAFMQFYKN) lie on the Extracellular side of the membrane. The chain crosses the membrane as a helical span at residues 273 to 297 (AKDWWLFSFYFCLPLAITAFFYTLE). At 298–325 (TCEMLRKKSGMQIALNDHLKQRREVAKT) the chain is on the cytoplasmic side. Ser-306 is modified (phosphoserine). The chain crosses the membrane as a helical span at residues 326–351 (VFCLVLVFALCWLPLHLSRILKHTLY). Residues 352 to 363 (DQNDPHRCELLS) lie on the Extracellular side of the membrane. A helical membrane pass occupies residues 364 to 390 (FLLVLEYIGINMASLNSCINPIALYLV). Residues 391 to 443 (SKRFKNCFKWCLCCWCQSFEEKQSLEDKQSCLKFKANDHGYDNFRSSNKYSSS) lie on the Cytoplasmic side of the membrane. 3 S-palmitoyl cysteine lipidation sites follow: Cys-403, Cys-404, and Cys-406. Ser-420 carries the phosphoserine modification. At Tyr-440 the chain carries Phosphotyrosine. Ser-441, Ser-442, and Ser-443 each carry phosphoserine.

The protein belongs to the G-protein coupled receptor 1 family. Endothelin receptor subfamily. EDNRB sub-subfamily.

It localises to the cell membrane. In terms of biological role, non-specific receptor for endothelin 1, 2, and 3. Mediates its action by association with G proteins that activate a phosphatidylinositol-calcium second messenger system. The protein is Endothelin receptor type B (EDNRB) of Equus caballus (Horse).